Consider the following 228-residue polypeptide: L-ribulose-5-phosphate 4-epimerase UlaF (228 aa).

Residues 26–27, 43–44, and 72–73 contribute to the substrate site; these read GN, SG, and SS. Aspartate 74, histidine 93, and histidine 95 together coordinate Zn(2+). Aspartate 118 (proton donor/acceptor) is an active-site residue. Zn(2+) is bound at residue histidine 167. The active-site Proton donor/acceptor is the tyrosine 225.

The protein belongs to the aldolase class II family. AraD/FucA subfamily. Zn(2+) serves as cofactor.

The catalysed reaction is L-ribulose 5-phosphate = D-xylulose 5-phosphate. It functions in the pathway cofactor degradation; L-ascorbate degradation; D-xylulose 5-phosphate from L-ascorbate: step 4/4. Functionally, catalyzes the isomerization of L-ribulose 5-phosphate to D-xylulose 5-phosphate. Is involved in the anaerobic L-ascorbate utilization. In Salmonella paratyphi A (strain ATCC 9150 / SARB42), this protein is L-ribulose-5-phosphate 4-epimerase UlaF.